The sequence spans 114 residues: MRLLLLTFLGVCCFAAWVVEGVGTEVLQESICVSLRTQRLPVQKIKTYTIKEGAMRAVIFVTKRGLRICADPQAKWVKTAIKTVDGRASASKSKAETIPTQAQRSASTAVTLTG.

Positions 1–21 (MRLLLLTFLGVCCFAAWVVEG) are cleaved as a signal peptide. C32 and C69 are disulfide-bonded. Positions 87–114 (RASASKSKAETIPTQAQRSASTAVTLTG) are disordered. A compositionally biased stretch (polar residues) spans 98 to 114 (IPTQAQRSASTAVTLTG).

Belongs to the intercrine gamma family.

The protein resides in the secreted. Functionally, chemotactic activity for lymphocytes but not for monocytes or neutrophils. In thymus, mediates medullary accumulation of thymic dendritic cells and contributes to regulatoy T cell development, playing a role in self-tolerance establishment. The chain is Lymphotactin (Xcl1) from Rattus norvegicus (Rat).